The primary structure comprises 189 residues: Protein GrpE (189 aa).

A compositionally biased stretch (basic and acidic residues) spans 1-38; the sequence is MTKSNETERMEESEETHSSDIRSASESDHASGSDHTES. The interval 1–54 is disordered; it reads MTKSNETERMEESEETHSSDIRSASESDHASGSDHTESADEIPTADAEQGELEQ.

It belongs to the GrpE family. As to quaternary structure, homodimer.

The protein resides in the cytoplasm. Its function is as follows. Participates actively in the response to hyperosmotic and heat shock by preventing the aggregation of stress-denatured proteins, in association with DnaK and GrpE. It is the nucleotide exchange factor for DnaK and may function as a thermosensor. Unfolded proteins bind initially to DnaJ; upon interaction with the DnaJ-bound protein, DnaK hydrolyzes its bound ATP, resulting in the formation of a stable complex. GrpE releases ADP from DnaK; ATP binding to DnaK triggers the release of the substrate protein, thus completing the reaction cycle. Several rounds of ATP-dependent interactions between DnaJ, DnaK and GrpE are required for fully efficient folding. The polypeptide is Protein GrpE (Tropheryma whipplei (strain Twist) (Whipple's bacillus)).